The following is a 198-amino-acid chain: Recombination protein RecR (198 aa).

A C4-type zinc finger spans residues 58 to 73; sequence CSVCNNLTEKDPCDFC. A Toprim domain is found at 81 to 175; sequence NLICVVESPK…KVTRIAHGLP (95 aa).

Belongs to the RecR family.

Functionally, may play a role in DNA repair. It seems to be involved in an RecBC-independent recombinational process of DNA repair. It may act with RecF and RecO. In Halothermothrix orenii (strain H 168 / OCM 544 / DSM 9562), this protein is Recombination protein RecR.